Consider the following 500-residue polypeptide: NAD(P)H-quinone oxidoreductase chain 4, chloroplastic (500 aa).

14 consecutive transmembrane segments (helical) span residues 4-24 (FPWL…IFFL), 35-55 (YTIA…CYHF), 87-107 (LGSI…AWPV), 111-131 (SQLF…LFSS), 134-154 (LLLF…LLSM), 167-187 (FILY…GMGL), 211-231 (ILLY…IPLH), 242-262 (HYST…YGLI), 274-294 (YLFS…AALT), 313-333 (MGFI…GAIL), 334-354 (QILS…TACD), 386-406 (LALP…GLIT), 417-437 (LITF…LSML), and 462-482 (LFLL…PDFV).

This sequence belongs to the complex I subunit 4 family.

It is found in the plastid. It localises to the chloroplast thylakoid membrane. It catalyses the reaction a plastoquinone + NADH + (n+1) H(+)(in) = a plastoquinol + NAD(+) + n H(+)(out). The enzyme catalyses a plastoquinone + NADPH + (n+1) H(+)(in) = a plastoquinol + NADP(+) + n H(+)(out). This chain is NAD(P)H-quinone oxidoreductase chain 4, chloroplastic, found in Saccharum hybrid (Sugarcane).